Here is a 1311-residue protein sequence, read N- to C-terminus: Transcriptional regulator ATRX homolog (1311 aa).

Residues 1–384 (MGKKNPNARH…KQKNKRKHIR (384 aa)) form a disordered region. A compositionally biased stretch (basic and acidic residues) spans 28–40 (SRRESATESKSAS). The span at 61–83 (KASGKATVSSSSDSDQAVANSSA) shows a compositional bias: low complexity. Over residues 114-125 (RGSQQKNVTIND) the composition is skewed to polar residues. 2 positions are modified to phosphoserine: Ser-126 and Ser-127. Residues 155–166 (SDSEEVDEEEES) show a composition bias toward acidic residues. Basic and acidic residues predominate over residues 181 to 202 (KPEKNSSKASKESIEKRQKAQK). Residues 219–237 (RRGSLSSERSSRASSSRAE) are compositionally biased toward low complexity. Over residues 241-265 (RPKRCVVRLKRVSLPKTKPAQKPKK) the composition is skewed to basic residues. 3 positions are modified to phosphoserine: Ser-267, Ser-268, and Ser-270. The span at 290–306 (EADSDYEAPAAEEEEEE) shows a compositional bias: acidic residues. Residues Ser-336, Ser-338, Ser-342, and Ser-343 each carry the phosphoserine modification. Positions 336–351 (SESDKGSSDFEPEEKQ) are enriched in basic and acidic residues. The span at 352-361 (KKKGRKRIKK) shows a compositional bias: basic residues. In terms of domain architecture, Helicase ATP-binding spans 476–664 (ESQEKPGSGC…YCMIQFVKPN (189 aa)). 489–496 (HCMGLGKT) lines the ATP pocket. Residues 615–618 (DEGH) carry the DEGH box motif. Residues 837-878 (ASSGKVKKRKTRNGNAGGGDSDSDLEMLGGLGGGSSVQKDDP) are disordered. Ser-857 and Ser-859 each carry phosphoserine. Residues 905–1085 (RLLQQCEAIG…SRHYNQTDLM (181 aa)) enclose the Helicase C-terminal domain. Positions 1285 to 1311 (MAGGSVAHGPPAAPAPGFEPDKVYEID) are disordered.

This sequence belongs to the SNF2/RAD54 helicase family.

The protein localises to the nucleus. It localises to the chromosome. It carries out the reaction ATP + H2O = ADP + phosphate + H(+). Its function is as follows. Global transcriptional regulator. Modifies gene expression by affecting chromatin. This Drosophila melanogaster (Fruit fly) protein is Transcriptional regulator ATRX homolog (XNP).